The following is a 420-amino-acid chain: FAD-dependent monooxygenase ntnJ (420 aa).

Residues 12-31 (FRVIVVGAGIGGLSAAVALA) form a helical membrane-spanning segment. Residues glutamate 41 and alanine 54 each coordinate FAD. N-linked (GlcNAc...) asparagine glycosylation is present at asparagine 124. Residue arginine 187 is part of the active site. Residue asparagine 264 is glycosylated (N-linked (GlcNAc...) asparagine). FAD is bound by residues aspartate 302 and valine 315.

Belongs to the paxM FAD-dependent monooxygenase family. It depends on FAD as a cofactor.

It localises to the membrane. It functions in the pathway secondary metabolite biosynthesis; terpenoid biosynthesis. Its function is as follows. FAD-dependent monooxygenase; part of the gene cluster that mediates the biosynthesis of the meroterpenoids nectripenoids A and B, as well as cochliquninone D and isocochliquninone E. The pathway probably begins with the HR-PKS ntnH that catalyzes two chain-extension steps to form a reduced triketide, which then primes the SAT domain in the NR-PKS ntnG to initiate three more cycles of extension to give a linear hexaketide corresponding to the polyketide part of nectripenoids. The FAD-dependent monooxygenase ntnJ then performs an oxidative decarboxylation at C11 of the ntnH/ntnG product, via an electrophilic aromatic hydroxylation with concomitant ipso-decarboxylation. The membrane-bound polyprenyl transferase ntnF then introduces a farnesyl group before the FAD-dependent monooxygenase ntnK functions as the first epoxidase on terminal C12'-C13' olefin, followed by a second epoxidation on C7'-C8' catalyzed by ntnA. The terpene cyclase/mutase ntnI then initiates the sequential tricyclic ring formation through protonation of the terminal epoxide and catalyzes the regioselective and stereoselective 6/6/6-tricyclic ring formation. The cytochrome P450 monooxygenase ntnM may then hydroxylate C1'. The polypeptide is FAD-dependent monooxygenase ntnJ (Nectria sp).